A 369-amino-acid polypeptide reads, in one-letter code: Geranylgeranyl pyrophosphate synthase, chloroplastic (369 aa).

Lysine 118, arginine 121, and histidine 150 together coordinate isopentenyl diphosphate. The Mg(2+) site is built by aspartate 157 and aspartate 163. Residue arginine 168 coordinates dimethylallyl diphosphate. Arginine 169 contacts isopentenyl diphosphate. Lysine 254, threonine 255, glutamine 292, lysine 309, and lysine 319 together coordinate dimethylallyl diphosphate.

The protein belongs to the FPP/GGPP synthase family. In terms of assembly, monomer. Requires Mg(2+) as cofactor.

The protein localises to the plastid. Its subcellular location is the chloroplast. It catalyses the reaction isopentenyl diphosphate + dimethylallyl diphosphate = (2E)-geranyl diphosphate + diphosphate. It carries out the reaction isopentenyl diphosphate + (2E)-geranyl diphosphate = (2E,6E)-farnesyl diphosphate + diphosphate. The catalysed reaction is isopentenyl diphosphate + (2E,6E)-farnesyl diphosphate = (2E,6E,10E)-geranylgeranyl diphosphate + diphosphate. The protein operates within isoprenoid biosynthesis; farnesyl diphosphate biosynthesis; farnesyl diphosphate from geranyl diphosphate and isopentenyl diphosphate: step 1/1. Its pathway is isoprenoid biosynthesis; geranyl diphosphate biosynthesis; geranyl diphosphate from dimethylallyl diphosphate and isopentenyl diphosphate: step 1/1. It participates in isoprenoid biosynthesis; geranylgeranyl diphosphate biosynthesis; geranylgeranyl diphosphate from farnesyl diphosphate and isopentenyl diphosphate: step 1/1. Functionally, catalyzes the trans-addition of the three molecules of IPP onto DMAPP to form geranylgeranyl pyrophosphate. In Capsicum annuum (Capsicum pepper), this protein is Geranylgeranyl pyrophosphate synthase, chloroplastic.